A 153-amino-acid chain; its full sequence is MRILEGNLIGQDKKFAIVAGRFNEFIVSKLIDGALDAFKRHGVEEDNIDLAWVPGAFEIPLIAKKLAKSGKYAGVVCLGTVIRGATSHYDYVCGEVSKGIANVSLDTEVPVIFGIVTTENIEQAIERAGTKAGNKGFDAAMAAIEMANLLENI.

5-amino-6-(D-ribitylamino)uracil contacts are provided by residues F22, 56–58 (AFE), and 80–82 (TVI). 85-86 (AT) serves as a coordination point for (2S)-2-hydroxy-3-oxobutyl phosphate. The active-site Proton donor is H88. F113 provides a ligand contact to 5-amino-6-(D-ribitylamino)uracil. R127 contacts (2S)-2-hydroxy-3-oxobutyl phosphate.

It belongs to the DMRL synthase family.

It carries out the reaction (2S)-2-hydroxy-3-oxobutyl phosphate + 5-amino-6-(D-ribitylamino)uracil = 6,7-dimethyl-8-(1-D-ribityl)lumazine + phosphate + 2 H2O + H(+). It participates in cofactor biosynthesis; riboflavin biosynthesis; riboflavin from 2-hydroxy-3-oxobutyl phosphate and 5-amino-6-(D-ribitylamino)uracil: step 1/2. Its function is as follows. Catalyzes the formation of 6,7-dimethyl-8-ribityllumazine by condensation of 5-amino-6-(D-ribitylamino)uracil with 3,4-dihydroxy-2-butanone 4-phosphate. This is the penultimate step in the biosynthesis of riboflavin. The protein is 6,7-dimethyl-8-ribityllumazine synthase of Clostridium perfringens (strain ATCC 13124 / DSM 756 / JCM 1290 / NCIMB 6125 / NCTC 8237 / Type A).